Consider the following 185-residue polypeptide: F-box protein At1g61340 (185 aa).

The F-box domain occupies 78 to 126; sequence SRELEDLPLDILVRIICGVEHEDLKQLFHVSKTIREATMIAKQSHFAYS.

This Arabidopsis thaliana (Mouse-ear cress) protein is F-box protein At1g61340.